Consider the following 881-residue polypeptide: Serine/threonine-protein phosphatase BSL1 (881 aa).

Kelch repeat units lie at residues 60–109 (GSSS…AVGT), 269–320 (RLHV…DQDP), and 338–385 (RIYV…PRFS). Disordered regions lie at residues 368 to 407 (SPLL…LSLD) and 436 to 464 (AGTL…ANEG). Polar residues-rich tracts occupy residues 374–383 (DRTQQSSTPR) and 445–460 (TSDA…TDGT). Phosphoserine is present on serine 491. The tract at residues 503–522 (VPMNNSDVPQPTKKFTRQKS) is disordered. Mn(2+) contacts are provided by aspartate 584, histidine 586, aspartate 618, and asparagine 650. Histidine 651 (proton donor) is an active-site residue. Mn(2+)-binding residues include histidine 703 and histidine 782. Residues 837–881 (ILSPENSPEHSGDDAWMQELNIQRPPTPTRGRPQPDFDRSSLAYI) are disordered. Serine 839 carries the phosphoserine modification.

This sequence belongs to the PPP phosphatase family. BSU subfamily. Interacts with CDG1 and CDL1. Requires Mn(2+) as cofactor. As to expression, expressed in mature cauline leaves and at the tip of influorescence, including flowers. Expressed at lower level in young tissues relative to older ones.

Its subcellular location is the nucleus. The catalysed reaction is O-phospho-L-seryl-[protein] + H2O = L-seryl-[protein] + phosphate. It carries out the reaction O-phospho-L-threonyl-[protein] + H2O = L-threonyl-[protein] + phosphate. Phosphatase involved in elongation process, probably by acting as a regulator of brassinolide signaling. This Arabidopsis thaliana (Mouse-ear cress) protein is Serine/threonine-protein phosphatase BSL1 (BSL1).